Reading from the N-terminus, the 255-residue chain is tRNA (guanine-N(1)-)-methyltransferase (255 aa).

Residues glycine 113 and 133-138 (IGDYVL) each bind S-adenosyl-L-methionine.

It belongs to the RNA methyltransferase TrmD family. In terms of assembly, homodimer.

It is found in the cytoplasm. It carries out the reaction guanosine(37) in tRNA + S-adenosyl-L-methionine = N(1)-methylguanosine(37) in tRNA + S-adenosyl-L-homocysteine + H(+). Its function is as follows. Specifically methylates guanosine-37 in various tRNAs. This chain is tRNA (guanine-N(1)-)-methyltransferase, found in Salmonella agona (strain SL483).